The chain runs to 460 residues: MRQEKDSLGIVEVPEDKLYGAQTMRSRNFFSWGPELMPYEVIRALVWIKKCAAQANQDLGFLDSKHCDMIVAAADEILEGGFEEHFPLKVWQTGSGTQSNMNVNEVIANLAIRHHGGVLGSKDPIHPNDHVNKSQSSNDVFPTAMHIAAVISLKNKLIPALDHMIRVLDAKVEEFRHDVKIGRTHLMDAVPMTLGQEFSGYSSQLRHCLESIAFSLAHLYELAIGATAVGTGLNVPEGFVEKIIHYLRKETDEPFIPASNYFSALSCHDALVDAHGSLATLACALTKIATDLSFLGSGPRCGLGELFFPENEPGSSIMPGKVNPTQCEALQMVCAQVLGNNQTVIIGGSRGNFELNVMKPVIIYNFLQSVDLLSEGMRAFSEFFVKGLKVNKARLQDNINNSLMLVTALAPVLGYDKCSKAALKAFHESISLKEACLALGYLSEKEFDRLVVPENMVGNH.

Substrate is bound by residues 95–97 (SGT), 126–129 (HPND), 136–138 (SSN), and T184. The active-site Proton donor/acceptor is H185. S315 is an active-site residue. Residues S316 and 321–323 (KVN) each bind substrate.

It belongs to the class-II fumarase/aspartase family. Fumarase subfamily. In terms of assembly, homotetramer.

The protein resides in the cytoplasm. The enzyme catalyses (S)-malate = fumarate + H2O. It participates in carbohydrate metabolism; tricarboxylic acid cycle; (S)-malate from fumarate: step 1/1. In terms of biological role, involved in the TCA cycle. Catalyzes the stereospecific interconversion of fumarate to L-malate. The polypeptide is Fumarate hydratase class II (Chlamydia pneumoniae (Chlamydophila pneumoniae)).